Consider the following 199-residue polypeptide: GTP cyclohydrolase-2 (199 aa).

A GTP-binding site is contributed by Arg-49 to Glu-53. 3 residues coordinate Zn(2+): Cys-54, Cys-65, and Cys-67. Residues Gln-70, Glu-92–Arg-94, and Thr-114 contribute to the GTP site. Catalysis depends on Asp-126, which acts as the Proton acceptor. Arg-128 acts as the Nucleophile in catalysis. The GTP site is built by Thr-149 and Lys-154.

Belongs to the GTP cyclohydrolase II family. Homodimer. It depends on Zn(2+) as a cofactor.

The catalysed reaction is GTP + 4 H2O = 2,5-diamino-6-hydroxy-4-(5-phosphoribosylamino)-pyrimidine + formate + 2 phosphate + 3 H(+). It participates in cofactor biosynthesis; riboflavin biosynthesis; 5-amino-6-(D-ribitylamino)uracil from GTP: step 1/4. Functionally, catalyzes the conversion of GTP to 2,5-diamino-6-ribosylamino-4(3H)-pyrimidinone 5'-phosphate (DARP), formate and pyrophosphate. This is GTP cyclohydrolase-2 from Blochmanniella pennsylvanica (strain BPEN).